The sequence spans 508 residues: Steroid 17-alpha-hydroxylase/17,20 lyase (508 aa).

Heme is bound at residue Cys-442.

The protein belongs to the cytochrome P450 family. Heme serves as cofactor.

It is found in the endoplasmic reticulum membrane. Its subcellular location is the microsome membrane. The catalysed reaction is a C21-steroid + reduced [NADPH--hemoprotein reductase] + O2 = a 17alpha-hydroxy-C21-steroid + oxidized [NADPH--hemoprotein reductase] + H2O + H(+). It catalyses the reaction progesterone + reduced [NADPH--hemoprotein reductase] + O2 = 17alpha-hydroxyprogesterone + oxidized [NADPH--hemoprotein reductase] + H2O + H(+). The enzyme catalyses pregnenolone + reduced [NADPH--hemoprotein reductase] + O2 = 17alpha-hydroxypregnenolone + oxidized [NADPH--hemoprotein reductase] + H2O + H(+). It carries out the reaction 17alpha-hydroxyprogesterone + reduced [NADPH--hemoprotein reductase] + O2 = androst-4-ene-3,17-dione + acetate + oxidized [NADPH--hemoprotein reductase] + H2O + 2 H(+). The catalysed reaction is 17alpha-hydroxyprogesterone + reduced [NADPH--hemoprotein reductase] + O2 = 16alpha,17alpha-dihydroxyprogesterone + oxidized [NADPH--hemoprotein reductase] + H2O + H(+). It catalyses the reaction 16alpha,17alpha-dihydroxyprogesterone + reduced [NADPH--hemoprotein reductase] + O2 = 6beta,16alpha,17alpha-trihydroxyprogesterone + oxidized [NADPH--hemoprotein reductase] + H2O + H(+). The enzyme catalyses 17alpha-hydroxypregnenolone + reduced [NADPH--hemoprotein reductase] + O2 = 3beta-hydroxyandrost-5-en-17-one + acetate + oxidized [NADPH--hemoprotein reductase] + H2O + 2 H(+). It carries out the reaction 16alpha,17alpha-dihydroxypregnenolone + reduced [NADPH--hemoprotein reductase] + O2 = 3beta,16alpha-dihydroxy-androst-5-en-17-one + acetate + oxidized [NADPH--hemoprotein reductase] + H2O + 2 H(+). The catalysed reaction is 3beta-hydroxyandrost-5-en-17-one + reduced [NADPH--hemoprotein reductase] + O2 = 3beta,16alpha-dihydroxy-androst-5-en-17-one + oxidized [NADPH--hemoprotein reductase] + H2O + H(+). It catalyses the reaction androst-4-ene-3,17-dione + reduced [NADPH--hemoprotein reductase] + O2 = 16alpha-hydroxyandrost-4-ene-3,17-dione + oxidized [NADPH--hemoprotein reductase] + H2O + H(+). Its pathway is steroid hormone biosynthesis. It participates in steroid biosynthesis; glucocorticoid biosynthesis. Its activity is regulated as follows. Regulated predominantly by intracellular cAMP levels. The 17,20-lyase activity is stimulated by cytochrome b5, which acts as an allosteric effector increasing the Vmax of the lyase activity. Functionally, a cytochrome P450 monooxygenase involved in corticoid and androgen biosynthesis. Catalyzes 17-alpha hydroxylation of C21 steroids, which is common for both pathways. A second oxidative step, required only for androgen synthesis, involves an acyl-carbon cleavage. The 17-alpha hydroxy intermediates, as part of adrenal glucocorticoids biosynthesis pathway, are precursors of cortisol. Hydroxylates steroid hormones, pregnenolone and progesterone to form 17-alpha hydroxy metabolites, followed by the cleavage of the C17-C20 bond to form C19 steroids, dehydroepiandrosterone (DHEA) and androstenedione. Has 16-alpha hydroxylase activity. Catalyzes 16-alpha hydroxylation of 17-alpha hydroxy pregnenolone, followed by the cleavage of the C17-C20 bond to form 16-alpha-hydroxy DHEA. Also 16-alpha hydroxylates androgens, relevant for estriol synthesis. Mechanistically, uses molecular oxygen inserting one oxygen atom into a substrate, and reducing the second into a water molecule, with two electrons provided by NADPH via cytochrome P450 reductase (CPR; NADPH-ferrihemoprotein reductase). This is Steroid 17-alpha-hydroxylase/17,20 lyase (CYP17A1) from Equus caballus (Horse).